The primary structure comprises 224 residues: Mannose-specific lectin 3 (224 aa).

Bulb-type lectin domains are found at residues 2–111 and 117–222; these read NNVL…PAAA and RNVL…VWST. Cystine bridges form between C30–C52 and C145–C170.

Heterotetramer of 2 domain 1 and 2 domain 2 chains arranged as a dimer of domain 1/domain 2 heterodimers.

In terms of biological role, mannose-specific lectin. Has weak agglutinating activity towards trypsin-treated erythrocytes from rabbit but not from human. The protein is Mannose-specific lectin 3 of Crocus vernus (Dutch crocus).